A 667-amino-acid polypeptide reads, in one-letter code: Probable E3 ubiquitin-protein ligase HIP1 (667 aa).

2 disordered regions span residues 142 to 163 (NGASQGSELHGGCSHTGSNGQA) and 285 to 311 (TTAGLSSSSYDPSGGNNNSGGSQRSFR). Residues 288–309 (GLSSSSYDPSGGNNNSGGSQRS) show a composition bias toward low complexity. The RING-type; atypical zinc finger occupies 620 to 661 (CCICQEEYVDGDDLGTLDCGHDFHVGCVRQWLVVKNTCPICK).

Belongs to the RING-type zinc finger family. In terms of assembly, interacts with HAL3.

The catalysed reaction is S-ubiquitinyl-[E2 ubiquitin-conjugating enzyme]-L-cysteine + [acceptor protein]-L-lysine = [E2 ubiquitin-conjugating enzyme]-L-cysteine + N(6)-ubiquitinyl-[acceptor protein]-L-lysine.. The protein operates within protein modification; protein ubiquitination. In terms of biological role, probable E3 ubiquitin-protein ligase that functions downstream of HAL3 and is required for HAL3-regulated plant growth. Activation of HIP1 by HAL3 may lead to the degradation of cell cycle suppressors, resulting in enhancement of cell division and plant growth. In Oryza sativa subsp. japonica (Rice), this protein is Probable E3 ubiquitin-protein ligase HIP1 (HIP1).